The primary structure comprises 1238 residues: Cullin-associated NEDD8-dissociated protein 1 (1238 aa).

HEAT repeat units follow at residues 41–78 (TYENKIVTKLLALTADSANNVQENVVKCLGLLIKRVKD), 126–167 (LVIK…KYGS), 171–208 (GDLENIQKVVLPKLNATRPAIRKRAILCLANIAFPSPD), 210–247 (LFNSLLDYIIKSIEEAKKPDHISTLIQAIGAICKSSGY), and 251–292 (KYLP…KCQK). The interval 315-354 (YSDDGEGEEDGDEEEEEMETSGDNDEEQEEEEEEEDLSDD) is disordered. HEAT repeat units follow at residues 382–419 (ELYQKVAPVLYNRFKEREENVRLDIFTTFVLLLKQLNK), 432–469 (QQVPKLVQSISKSLIDKSIRTRVGAIALLKELVMIIPG), 603–641 (EIQSELQPCLSILLERLDNELTRVVTVKVLSRIINSSIN), 646–683 (SILPSAIKLLSTFLRKNNRVLKQSSLIALNDIVKVCPN), 688–725 (SLLTGILTEMATLINESDLQITHLAFVFIQNLLKNYSE), 853–890 (HENENLQESVYKTFEANNEEIKQVAALCLGDIAVCSLQ), 933–966 (PFLQSILPLLFDNCVNEEEGTRNIVAECLGKLSM), 967–1004 (IEPNEIIPKLVEKIKSPSPLERSTIVTSIKFSIMENKE), and 1008–1045 (QYLAPNISQFLSLLHDGDLIVRRSALLSLNYIAHNKPN).

This sequence belongs to the CAND family.

It localises to the nucleus. Key assembly factor of SCF (SKP1-CUL1-F-box protein) E3 ubiquitin ligase complexes that promotes the exchange of the substrate-recognition F-box subunit in SCF complexes, thereby playing a key role in the cellular repertoire of SCF complexes. Acts as a F-box protein exchange factor. The chain is Cullin-associated NEDD8-dissociated protein 1 (cand1) from Dictyostelium discoideum (Social amoeba).